The sequence spans 150 residues: MSKVILTTEVSGLGSPGDVVEVKNGFSRNYLVPQGFAVIWSRGGEKQIEQIKAARAAREHATIEEAQDLKSRLEAKIVKLTVKAGQGGRLFGSVKTSDIAKAVEESGIGQVDKRKIEIPNPIKGTGNHEATIRLRDDIVATISLQVVAAK.

It belongs to the bacterial ribosomal protein bL9 family.

In terms of biological role, binds to the 23S rRNA. This is Large ribosomal subunit protein bL9 from Clavibacter sepedonicus (Clavibacter michiganensis subsp. sepedonicus).